Here is a 253-residue protein sequence, read N- to C-terminus: Imidazole glycerol phosphate synthase subunit HisF (253 aa).

Active-site residues include D11 and D130.

It belongs to the HisA/HisF family. As to quaternary structure, heterodimer of HisH and HisF.

It is found in the cytoplasm. It catalyses the reaction 5-[(5-phospho-1-deoxy-D-ribulos-1-ylimino)methylamino]-1-(5-phospho-beta-D-ribosyl)imidazole-4-carboxamide + L-glutamine = D-erythro-1-(imidazol-4-yl)glycerol 3-phosphate + 5-amino-1-(5-phospho-beta-D-ribosyl)imidazole-4-carboxamide + L-glutamate + H(+). Its pathway is amino-acid biosynthesis; L-histidine biosynthesis; L-histidine from 5-phospho-alpha-D-ribose 1-diphosphate: step 5/9. IGPS catalyzes the conversion of PRFAR and glutamine to IGP, AICAR and glutamate. The HisF subunit catalyzes the cyclization activity that produces IGP and AICAR from PRFAR using the ammonia provided by the HisH subunit. This is Imidazole glycerol phosphate synthase subunit HisF from Acetivibrio thermocellus (strain ATCC 27405 / DSM 1237 / JCM 9322 / NBRC 103400 / NCIMB 10682 / NRRL B-4536 / VPI 7372) (Clostridium thermocellum).